Here is a 121-residue protein sequence, read N- to C-terminus: Non-structural protein 8 (121 aa).

A signal peptide spans 1–15 (MKLLIVFGLLASVYC). The SARS ORF8 Ig-like domain occupies 19–121 (ECSIQECCEN…HDVRVVLDFI (103 aa)). Intrachain disulfides connect cysteine 25-cysteine 90, cysteine 37-cysteine 102, and cysteine 61-cysteine 83.

In Bat coronavirus HKU3 (BtCoV), this protein is Non-structural protein 8.